Here is a 243-residue protein sequence, read N- to C-terminus: uncharacterized protein (243 aa).

The Bipartite nuclear localization signal signature appears at 207-224; it reads KKTSISGYKTLDVKRKFV.

This is an uncharacterized protein from Acheta domesticus (House cricket).